A 158-amino-acid polypeptide reads, in one-letter code: C-type lectin BfL-1 (158 aa).

An N-terminal signal peptide occupies residues 1–21 (MGHFTFIGLCLLAMFLSLSGA). Cystine bridges form between cysteine 26-cysteine 37, cysteine 54-cysteine 154, cysteine 61-cysteine 156, and cysteine 129-cysteine 146. Residues 33–155 (KNGLCYKVFS…CAALRPFLCQ (123 aa)) enclose the C-type lectin domain. Residues glutamine 119, aspartate 121, and glutamate 127 each contribute to the Ca(2+) site. The Galactose-binding motif lies at 119-121 (QPD). An N-linked (GlcNAc...) asparagine glycan is attached at asparagine 134. The Ca(2+) site is built by asparagine 142 and aspartate 143.

It belongs to the true venom lectin family. As to quaternary structure, homodimer; non-covalently linked. Expressed by the venom gland.

It localises to the secreted. In terms of biological role, galactose-binding lectin which recognizes specific carbohydrate structures and agglutinates a variety of animal cells by binding to cell-surface glycoproteins and glycolipids. May be a calcium-dependent lectin. This chain is C-type lectin BfL-1, found in Bungarus fasciatus (Banded krait).